Reading from the N-terminus, the 185-residue chain is Elongation factor P (185 aa).

It belongs to the elongation factor P family.

Its subcellular location is the cytoplasm. It participates in protein biosynthesis; polypeptide chain elongation. Its function is as follows. Involved in peptide bond synthesis. Stimulates efficient translation and peptide-bond synthesis on native or reconstituted 70S ribosomes in vitro. Probably functions indirectly by altering the affinity of the ribosome for aminoacyl-tRNA, thus increasing their reactivity as acceptors for peptidyl transferase. The polypeptide is Elongation factor P (Petrotoga mobilis (strain DSM 10674 / SJ95)).